A 427-amino-acid chain; its full sequence is tRNA(Ile)-lysidine synthase (427 aa).

27–32 is a binding site for ATP; that stretch reads SGGVDS.

Belongs to the tRNA(Ile)-lysidine synthase family.

It is found in the cytoplasm. It carries out the reaction cytidine(34) in tRNA(Ile2) + L-lysine + ATP = lysidine(34) in tRNA(Ile2) + AMP + diphosphate + H(+). Its function is as follows. Ligates lysine onto the cytidine present at position 34 of the AUA codon-specific tRNA(Ile) that contains the anticodon CAU, in an ATP-dependent manner. Cytidine is converted to lysidine, thus changing the amino acid specificity of the tRNA from methionine to isoleucine. The chain is tRNA(Ile)-lysidine synthase from Streptococcus equi subsp. zooepidemicus (strain H70).